The sequence spans 175 residues: Shikimate kinase (175 aa).

12–17 lines the ATP pocket; the sequence is GAGKTT. Threonine 16 serves as a coordination point for Mg(2+). Positions 34, 58, and 80 each coordinate substrate. Arginine 117 lines the ATP pocket. Residue arginine 136 coordinates substrate.

The protein belongs to the shikimate kinase family. In terms of assembly, monomer. Mg(2+) is required as a cofactor.

It is found in the cytoplasm. The enzyme catalyses shikimate + ATP = 3-phosphoshikimate + ADP + H(+). It participates in metabolic intermediate biosynthesis; chorismate biosynthesis; chorismate from D-erythrose 4-phosphate and phosphoenolpyruvate: step 5/7. In terms of biological role, catalyzes the specific phosphorylation of the 3-hydroxyl group of shikimic acid using ATP as a cosubstrate. This Saccharopolyspora erythraea (strain ATCC 11635 / DSM 40517 / JCM 4748 / NBRC 13426 / NCIMB 8594 / NRRL 2338) protein is Shikimate kinase.